A 500-amino-acid chain; its full sequence is Hexokinase-3 (500 aa).

Residues 4-24 (VGLGVAVGCAAVTCAIAAALV) traverse the membrane as a helical segment. The Hexokinase domain maps to 35-487 (RRAVALLREF…SGVGAALLAA (453 aa)). The tract at residues 90–222 (SGSEEGVYYS…GLNVRVTALV (133 aa)) is hexokinase small subdomain. Residues Gly104, Thr105, and Asn106 each contribute to the ADP site. Positions 188, 189, 223, and 224 each coordinate D-glucose. Residues 223–476 (NDTVGTLALG…RNVTLRVTED (254 aa)) are hexokinase large subdomain. Ser247 is an ADP binding site. Residues Asn250, Glu278, and Glu309 each coordinate D-glucose. An ADP-binding site is contributed by Gly441.

This sequence belongs to the hexokinase family. As to expression, expressed in roots, leaves, flowers, immature seeds and seed coat. Expressed in young shoots, tiller buds, endosperm seven days after fertilization, and interconnecting tissues such as pulvini and nodes.

The protein resides in the mitochondrion outer membrane. The catalysed reaction is a D-hexose + ATP = a D-hexose 6-phosphate + ADP + H(+). It carries out the reaction D-fructose + ATP = D-fructose 6-phosphate + ADP + H(+). It catalyses the reaction D-glucose + ATP = D-glucose 6-phosphate + ADP + H(+). The protein operates within carbohydrate metabolism; hexose metabolism. It participates in carbohydrate degradation; glycolysis; D-glyceraldehyde 3-phosphate and glycerone phosphate from D-glucose: step 1/4. Its function is as follows. Fructose and glucose phosphorylating enzyme. Involved in the regulation of cell expansion in spikelet hulls, grain size, and gibberellin biosynthesis and homeostasis. This Oryza sativa subsp. japonica (Rice) protein is Hexokinase-3.